We begin with the raw amino-acid sequence, 963 residues long: Importin-13 (963 aa).

HEAT repeat units lie at residues 24-54 (ENVEKALHQLYYDPNIENKNLAQKWLMQAQV), 56-88 (PQAWHFSWQLLQPDKVPEIQYFGASALHIKISR), 95-135 (TDQY…LSMM), 142-179 (AVADMVRLFQAEDSPVDGQGRCLALLELLTVLPEEFQT), 194-231 (LAVECGAVFPLLEQLLQQPSSPSCVRQKVLKCFSSWVQ), 236-268 (LQDCEALIQAAFAALQDSELFDSSVEAIVNAIS), 276-325 (VNTL…ALLD), 330-372 (WQSF…DDIL), 375-438 (EAEK…YEML), 440-476 (AELLSNLYDKLGRLLTSSEEPYSWQHTEALLYGFQSI), 487-522 (VVPGLIGLIPRISISNVQLADTVMFTIGALSEWLAD), 524-558 (PVMINSVLPLVLHALGNPELSVSSVSTLKKICREC), 562-600 (LPPYAANIVAVSQDVLMKQIHKTSQCMWLMQALGFLLSA), 603-648 (VEEI…SNLF), 676-716 (PVVV…VKTL), 720-754 (FAPMVPQLCEMLGRMYSTIPQASALDLTRQLVHIF), 761-803 (FPPI…ALKR), 815-845 (VKAVFQCAVLALKFPEAPTVKASCGFFTELL), 860-893 (EDGRMLLIAVLEAIGGQASRSLMDCFADILFALN), and 897-931 (FSLLSMWIKEALQPPGFPSARLSPEQKDTFSQQIL). One can recognise an Importin N-terminal domain in the interval 45-111 (AQKWLMQAQV…KAQLFTQITR (67 aa)).

Belongs to the importin beta family. Interacts with UBC9, RAN, RBM8A, eIF-1A and PAX6. Expressed in fetal brain, heart, intestine and kidney.

The protein resides in the cytoplasm. It localises to the nucleus. In terms of biological role, functions in nuclear protein import as nuclear transport receptor. Serves as receptor for nuclear localization signals (NLS) in cargo substrates. Is thought to mediate docking of the importin/substrate complex to the nuclear pore complex (NPC) through binding to nucleoporin and the complex is subsequently translocated through the pore by an energy requiring, Ran-dependent mechanism. At the nucleoplasmic side of the NPC, Ran binds to the importin, the importin/substrate complex dissociates and importin is re-exported from the nucleus to the cytoplasm where GTP hydrolysis releases Ran. The directionality of nuclear import is thought to be conferred by an asymmetric distribution of the GTP- and GDP-bound forms of Ran between the cytoplasm and nucleus. Mediates the nuclear import of UBC9, the RBM8A/MAGOH complex, PAX6 and probably other members of the paired homeobox family. Also mediates nuclear export of eIF-1A, and the cytoplasmic release of eIF-1A is triggered by the loading of import substrates onto IPO13. In Homo sapiens (Human), this protein is Importin-13 (IPO13).